The following is a 68-amino-acid chain: Small ribosomal subunit protein bS21 (68 aa).

It belongs to the bacterial ribosomal protein bS21 family.

This chain is Small ribosomal subunit protein bS21, found in Ruegeria sp. (strain TM1040) (Silicibacter sp.).